Here is a 525-residue protein sequence, read N- to C-terminus: Protein disulfide-isomerase A2 (525 aa).

Positions Met1–Gly21 are cleaved as a signal peptide. Residues Arg27 to Gly152 form the Thioredoxin 1 domain. Catalysis depends on nucleophile residues Cys71 and Cys74. Cys71 and Cys74 are disulfide-bonded. 2 N-linked (GlcNAc...) asparagine glycosylation sites follow: Asn127 and Asn284. The Thioredoxin 2 domain maps to Val367–Val496. Residues Cys418 and Cys421 each act as nucleophile in the active site. Cys418 and Cys421 are joined by a disulfide. Positions Asp492–Leu525 are disordered. Positions Glu505–Pro514 are enriched in pro residues. Asn516 carries N-linked (GlcNAc...) asparagine glycosylation. The span at Asn516–Leu525 shows a compositional bias: polar residues. The Prevents secretion from ER signature appears at Lys522–Leu525.

Belongs to the protein disulfide isomerase family. Monomer; predominantly as monomer under reducing conditions. Homodimer; disulfide-linked. Part of a large chaperone multiprotein complex comprising DNAJB11, HSP90B1, HSPA5, HYOU, PDIA2, PDIA4, PDIA6, PPIB, SDF2L1, UGGT1 and very small amounts of ERP29, but not, or at very low levels, CALR nor CANX. Post-translationally, the disulfide-linked homodimer exhibits an enhanced chaperone activity. In terms of processing, glycosylated. In terms of tissue distribution, highly expressed in pancreas (at protein level).

It is found in the endoplasmic reticulum lumen. It catalyses the reaction Catalyzes the rearrangement of -S-S- bonds in proteins.. Its function is as follows. Acts as an intracellular estrogen-binding protein. May be involved in modulating cellular levels and biological functions of estrogens in the pancreas. May act as a chaperone that inhibits aggregation of misfolded proteins. This is Protein disulfide-isomerase A2 (PDIA2) from Homo sapiens (Human).